A 53-amino-acid polypeptide reads, in one-letter code: Conotoxin Cal9.2e (53 aa).

The propeptide occupies 1–6 (KKGVTQ). Intrachain disulfides connect Cys-15/Cys-32, Cys-20/Cys-42, and Cys-22/Cys-47.

As to expression, expressed by the venom duct.

It localises to the secreted. Its function is as follows. Probable neurotoxin with unknown target. Possibly targets ion channels. The sequence is that of Conotoxin Cal9.2e from Californiconus californicus (California cone).